Consider the following 155-residue polypeptide: Large ribosomal subunit protein uL16m (155 aa).

This sequence belongs to the universal ribosomal protein uL16 family.

It localises to the mitochondrion. The protein is Large ribosomal subunit protein uL16m (RPL16) of Petunia hybrida (Petunia).